Reading from the N-terminus, the 298-residue chain is Lysozyme-like protein 1 (298 aa).

An N-terminal signal peptide occupies residues 1-16; it reads MLKLAFVTFLFALASA. Positions 59–277 constitute a Ch-type lysozyme domain; the sequence is YAYAVDISVP…AAASSKNTDF (219 aa).

It belongs to the glycosyl hydrolase 25 family. Expressed in intestine, IL2 and IL6 neurons and some neurons in the head ganglia.

It is found in the cytoplasmic vesicle lumen. Its function is as follows. Involved in resistance to Gram-negative bacterium S.marcescens and to bacterium Gram-positive S.aureus infection. This is Lysozyme-like protein 1 from Caenorhabditis elegans.